The sequence spans 250 residues: 3-deoxy-manno-octulosonate cytidylyltransferase (250 aa).

The protein belongs to the KdsB family.

The protein localises to the cytoplasm. It catalyses the reaction 3-deoxy-alpha-D-manno-oct-2-ulosonate + CTP = CMP-3-deoxy-beta-D-manno-octulosonate + diphosphate. Its pathway is nucleotide-sugar biosynthesis; CMP-3-deoxy-D-manno-octulosonate biosynthesis; CMP-3-deoxy-D-manno-octulosonate from 3-deoxy-D-manno-octulosonate and CTP: step 1/1. The protein operates within bacterial outer membrane biogenesis; lipopolysaccharide biosynthesis. Its function is as follows. Activates KDO (a required 8-carbon sugar) for incorporation into bacterial lipopolysaccharide in Gram-negative bacteria. This chain is 3-deoxy-manno-octulosonate cytidylyltransferase, found in Syntrophobacter fumaroxidans (strain DSM 10017 / MPOB).